Reading from the N-terminus, the 152-residue chain is Protein Turandot X (152 aa).

The signal sequence occupies residues 1–22 (MGFYISSLLICVFLGIVRFASA).

It belongs to the Turandot family.

It is found in the secreted. Its function is as follows. A humoral factor that may play a role in stress tolerance. This is Protein Turandot X from Drosophila erecta (Fruit fly).